Here is a 66-residue protein sequence, read N- to C-terminus: Large ribosomal subunit protein uL29 (66 aa).

It belongs to the universal ribosomal protein uL29 family.

The protein is Large ribosomal subunit protein uL29 of Brucella abortus (strain S19).